Consider the following 913-residue polypeptide: Cadherin-4 (913 aa).

Positions 1-20 are cleaved as a signal peptide; that stretch reads MTTGSVLPLLLLGLSGALRA. The propeptide occupies 21-166; it reads HREDLTVREA…SSGGLRRQKR (146 aa). N146 carries an N-linked (GlcNAc...) asparagine glycan. Cadherin domains follow at residues 167–274, 275–389, 390–504, 505–610, and 611–721; these read DWVI…RPEF, INQV…PPEF, TTST…APYF, PSNH…DNAP, and QLLP…TVGA. Over 167–731 the chain is Extracellular; the sequence is DWVIPPINVP…VAAAGLGTGA (565 aa). 6 N-linked (GlcNAc...) asparagine glycosylation sites follow: N280, N409, N554, N629, N658, and N699. Residues 732–753 form a helical membrane-spanning segment; the sequence is IVAILICIVILLIMVLLFVVWM. Residues 754–913 are Cytoplasmic-facing; the sequence is KRREKERHTK…ADMYGGGEED (160 aa).

Distributed widely in mouse tissues with high levels present in brain, skeletal muscle and thymus.

The protein localises to the cell membrane. Cadherins are calcium-dependent cell adhesion proteins. They preferentially interact with themselves in a homophilic manner in connecting cells; cadherins may thus contribute to the sorting of heterogeneous cell types. May play an important role in retinal development. This chain is Cadherin-4 (Cdh4), found in Mus musculus (Mouse).